The sequence spans 252 residues: tRNA (guanine-N(7)-)-methyltransferase (252 aa).

S-adenosyl-L-methionine-binding residues include E75, E100, D127, and D150. D150 is a catalytic residue. K154 contacts substrate. The segment at 156–161 is interaction with RNA; sequence RHNKRR. Substrate is bound by residues D186 and 223–226; that span reads THFE.

Belongs to the class I-like SAM-binding methyltransferase superfamily. TrmB family.

The catalysed reaction is guanosine(46) in tRNA + S-adenosyl-L-methionine = N(7)-methylguanosine(46) in tRNA + S-adenosyl-L-homocysteine. It functions in the pathway tRNA modification; N(7)-methylguanine-tRNA biosynthesis. Functionally, catalyzes the formation of N(7)-methylguanine at position 46 (m7G46) in tRNA. The polypeptide is tRNA (guanine-N(7)-)-methyltransferase (Xanthomonas oryzae pv. oryzae (strain MAFF 311018)).